A 460-amino-acid polypeptide reads, in one-letter code: Indoleacetamide hydrolase (460 aa).

Catalysis depends on charge relay system residues Lys71 and Ser146. Ser169 serves as the catalytic Acyl-ester intermediate.

Belongs to the amidase family.

It functions in the pathway plant hormone metabolism; auxin biosynthesis. Hydrolyzes indole-3-acetamide (IAM) into indole-3-acetic acid (IAA). The polypeptide is Indoleacetamide hydrolase (iaaH) (Pantoea agglomerans pv. gypsophilae (Erwinia herbicola)).